A 114-amino-acid chain; its full sequence is MENNKLFNLKLTDLAKNKIKNLLKEEKNKNKKFRIYISGGGCNGFQYNFILDEKINKEDHLILFLDVEIVIDSISLQYLIGGVVDYKEELLESCFFVINPNAKTTCSCGTSFSI.

3 residues coordinate iron-sulfur cluster: cysteine 42, cysteine 106, and cysteine 108.

Belongs to the HesB/IscA family. In terms of assembly, homodimer. Requires iron-sulfur cluster as cofactor.

Its function is as follows. Required for insertion of 4Fe-4S clusters for at least IspG. The chain is Iron-sulfur cluster insertion protein ErpA from Wigglesworthia glossinidia brevipalpis.